The sequence spans 554 residues: (S)-1-hydroxy-N-methylcanadine 13-hydroxylase CYP82X2 (554 aa).

Residues 23–43 (IISTFIVTIISIVFLYTVLLI) form a helical membrane-spanning segment. C494 lines the heme pocket.

Belongs to the cytochrome P450 family. Requires heme as cofactor. As to expression, highly expressed in capsules. Expressed is stems.

The protein resides in the membrane. It carries out the reaction (S)-1-hydroxy-N-methylcanadine + reduced [NADPH--hemoprotein reductase] + O2 = (13S,14R)-1,13-dihydroxy-N-methylcanadine + oxidized [NADPH--hemoprotein reductase] + H2O + H(+). It participates in alkaloid biosynthesis. Functionally, cytochrome P450 involved in the biosynthesis of the benzylisoquinoline alkaloid noscapine. Converts (S)-1-hydroxy-N-methylcanadine to (13S,14R)-1,13-dihydroxy-N-methylcanadine. The sequence is that of (S)-1-hydroxy-N-methylcanadine 13-hydroxylase CYP82X2 from Papaver somniferum (Opium poppy).